The following is a 596-amino-acid chain: Pentatricopeptide repeat-containing protein At1g50270 (596 aa).

PPR repeat units lie at residues 66-102 (SIQL…GVIP), 103-136 (SRHT…GLDS), 137-167 (DPFV…AEDK), 168-202 (DVVT…GVAA), 203-237 (NEMT…GRVK), 239-269 (DVFI…MPSR), 270-304 (NVVT…DVAP), 305-339 (NEKT…SIEI), 340-370 (NTTA…LHEK), 371-405 (NVYT…HVSP), 406-436 (NEVT…MKGR), and 442-472 (KADH…MPME). A type E motif region spans residues 477 to 552 (VWGALFGSCL…SPGFSWIEVK (76 aa)). Residues 553-584 (GKLCEFIAFDDKKPLESDDLYKTLDTVGVQMR) are type E(+) motif.

Belongs to the PPR family. PCMP-E subfamily.

The polypeptide is Pentatricopeptide repeat-containing protein At1g50270 (PCMP-E42) (Arabidopsis thaliana (Mouse-ear cress)).